We begin with the raw amino-acid sequence, 353 residues long: ATP-dependent (S)-NAD(P)H-hydrate dehydratase (353 aa).

A YjeF C-terminal domain is found at 18–345 (MLARVRQMVP…DEVHTAFLNL (328 aa)). Residues 95 to 121 (RSSPPALSSSDSGSSPSRTKSAPDTDP) are disordered. A compositionally biased stretch (low complexity) spans 96–114 (SSPPALSSSDSGSSPSRTK). Residues Gly143 and 196–202 (NVVEFGR) contribute to the (6S)-NADPHX site. ATP contacts are provided by residues 241-245 (KGAKD) and 260-269 (GGLKRSGGQG). Asp270 contacts (6S)-NADPHX.

Belongs to the NnrD/CARKD family. Mg(2+) is required as a cofactor.

Its subcellular location is the cytoplasm. The catalysed reaction is (6S)-NADHX + ATP = ADP + phosphate + NADH + H(+). It catalyses the reaction (6S)-NADPHX + ATP = ADP + phosphate + NADPH + H(+). Functionally, catalyzes the dehydration of the S-form of NAD(P)HX at the expense of ATP, which is converted to ADP. Together with NAD(P)HX epimerase, which catalyzes the epimerization of the S- and R-forms, the enzyme allows the repair of both epimers of NAD(P)HX, a damaged form of NAD(P)H that is a result of enzymatic or heat-dependent hydration. The chain is ATP-dependent (S)-NAD(P)H-hydrate dehydratase from Neurospora crassa (strain ATCC 24698 / 74-OR23-1A / CBS 708.71 / DSM 1257 / FGSC 987).